The following is a 375-amino-acid chain: Acyl-coenzyme A diphosphatase NUDT19 (375 aa).

A Nudix hydrolase domain is found at A15 to E263. The interval L91–G116 is disordered. Positions G116 to G137 match the Nudix box motif. 2 residues coordinate Mg(2+): E131 and E135. The Microbody targeting signal signature appears at S373–L375.

Belongs to the Nudix hydrolase family. As to quaternary structure, monomer. The cofactor is Mg(2+). Requires Mn(2+) as cofactor.

The protein resides in the peroxisome. The enzyme catalyses an acyl-CoA + H2O = an acyl-4'-phosphopantetheine + adenosine 3',5'-bisphosphate + 2 H(+). It carries out the reaction CoA + H2O = (R)-4'-phosphopantetheine + adenosine 3',5'-bisphosphate + 2 H(+). It catalyses the reaction hexanoyl-CoA + H2O = hexanoyl-4'-phosphopantetheine + adenosine 3',5'-bisphosphate + 2 H(+). The catalysed reaction is octanoyl-CoA + H2O = S-octanoyl-4'-phosphopantetheine + adenosine 3',5'-bisphosphate + 2 H(+). The enzyme catalyses butanoyl-CoA + H2O = S-butanoyl-4'-phosphopantetheine + adenosine 3',5'-bisphosphate + 2 H(+). It carries out the reaction propanoyl-CoA + H2O = propanoyl-4'-phosphopantetheine + adenosine 3',5'-bisphosphate + 2 H(+). It catalyses the reaction malonyl-CoA + H2O = malonyl-4'-phosphopantetheine + adenosine 3',5'-bisphosphate + 2 H(+). The catalysed reaction is succinyl-CoA + H2O = succinyl-4'-phosphopantetheine + adenosine 3',5'-bisphosphate + 2 H(+). The enzyme catalyses choloyl-CoA + H2O = S-choloyl-4'-phosphopantetheine + adenosine 3',5'-bisphosphate + 2 H(+). It carries out the reaction 4,8-dimethylnonanoyl-CoA + H2O = S-(4,8-dimethylnonanoyl)-4'-phosphopantetheine + adenosine 3',5'-bisphosphate + 2 H(+). It catalyses the reaction (9Z,12Z,15Z)-octadecatrienoyl-CoA + H2O = S-(9Z,12Z,15Z-octadecatrienoyl)-4'-phosphopantetheine + adenosine 3',5'-bisphosphate + 2 H(+). The catalysed reaction is (9Z,12Z)-octadecadienoyl-CoA + H2O = S-(9Z,12Z-octadecadienoyl)-4'-phosphopantetheine + adenosine 3',5'-bisphosphate + 2 H(+). The enzyme catalyses (9Z)-hexadecenoyl-CoA + H2O = S-(9Z-hexadecenoyl)-4'-phosphopantetheine + adenosine 3',5'-bisphosphate + 2 H(+). It carries out the reaction (9Z)-tetradecenoyl-CoA + H2O = S-(9Z-tetradecenoyl)-4'-phosphopantetheine + adenosine 3',5'-bisphosphate + 2 H(+). It catalyses the reaction (6Z)-octenoyl-CoA + H2O = S-(6Z-octenoyl)-4'-phosphopantetheine + adenosine 3',5'-bisphosphate + 2 H(+). The catalysed reaction is hexadecanoyl-CoA + H2O = S-hexadecanoyl-4'-phosphopantetheine + adenosine 3',5'-bisphosphate + 2 H(+). The enzyme catalyses tetradecanoyl-CoA + H2O = tetradecanoyl-4'-phosphopantetheine + adenosine 3',5'-bisphosphate + 2 H(+). It carries out the reaction dodecanoyl-CoA + H2O = S-dodecanoyl-4'-phosphopantetheine + adenosine 3',5'-bisphosphate + 2 H(+). It catalyses the reaction a 5'-end CoA-ribonucleoside in mRNA + H2O = a 5'-end phospho-adenosine-phospho-ribonucleoside in mRNA + (R)-4'-phosphopantetheine + 2 H(+). Fatty acyl-coenzyme A (CoA) diphosphatase that hydrolyzes fatty acyl-CoA to yield acyl-4'-phosphopantetheine and adenosine 3',5'-bisphosphate. Mediates the hydrolysis of a wide range of CoA esters, including choloyl-CoA and branched-chain fatty-acyl-CoA esters and at low substrate concentrations medium and long-chain fatty-acyl-CoA esters are the primary substrates. Highest activity seen with medium-chain acyl-CoA esters and higher rates of activity seen with the unsaturated acyl-CoA esters compared with the saturated esters. Exhibits decapping activity towards dpCoA-capped RNAs in vitro. The sequence is that of Acyl-coenzyme A diphosphatase NUDT19 (NUDT19) from Homo sapiens (Human).